Here is a 446-residue protein sequence, read N- to C-terminus: Neuropeptide Y receptor type 5 (446 aa).

The Extracellular segment spans residues 1-42 (MDLELQDFYNKTLATENNTAATRNSDFPVWDDYKSSVDDLQY). 2 N-linked (GlcNAc...) asparagine glycosylation sites follow: Asn-10 and Asn-17. Residues 43-63 (FLIGLYTFVSLLGFMGNLLIL) traverse the membrane as a helical segment. Residues 64–77 (MALMRKRNQKTMVN) lie on the Cytoplasmic side of the membrane. Residues 78–98 (FLIGNLAFSDILVVLFCSPFT) form a helical membrane-spanning segment. Residues 99-117 (LTSVLLDQWMFGKVMCHIM) lie on the Extracellular side of the membrane. Residues Cys-114 and Cys-198 are joined by a disulfide bond. A helical transmembrane segment spans residues 118 to 138 (PFLQCVSVLVSTLILISIAIV). The Cytoplasmic segment spans residues 139-156 (RYHMIKHPISNNLTANHG). A helical transmembrane segment spans residues 157-177 (YFLIATVWTLGFAICSPLPVF). At 178-208 (HSLVELQETFDSALLSSRYLCVESWPSDSYR) the chain is on the extracellular side. Residues 209 to 229 (IAFTISLLLVQYILPLVCLTV) traverse the membrane as a helical segment. Over 230 to 369 (SHTSVCRSIS…KKRSRSVFYR (140 aa)) the chain is Cytoplasmic. The helical transmembrane segment at 370-390 (LTILILVFAVSWMPLHLFHVV) threads the bilayer. Topologically, residues 391–407 (TDFNDNLISNRHFKLVY) are extracellular. The chain crosses the membrane as a helical span at residues 408 to 428 (CICHLLGMMSCCLNPILYGFL). Residues 429–446 (NNGIKADLISLIQCLHMS) are Cytoplasmic-facing. Cys-442 is lipidated: S-palmitoyl cysteine.

Belongs to the G-protein coupled receptor 1 family.

The protein localises to the cell membrane. In terms of biological role, receptor for neuropeptide Y and peptide YY. The activity of this receptor is mediated by G proteins that inhibit adenylate cyclase activity. Seems to be associated with food intake. Could be involved in feeding disorders. The chain is Neuropeptide Y receptor type 5 (NPY5R) from Canis lupus familiaris (Dog).